The sequence spans 334 residues: Formamidase (334 aa).

In terms of domain architecture, CN hydrolase spans 14 to 260 (FLVAAIQFPV…WEIVTGEIYP (247 aa)). Residue Glu60 is the Proton acceptor of the active site. Residue Lys133 is the Proton donor of the active site. The active-site Nucleophile is the Cys166.

This sequence belongs to the carbon-nitrogen hydrolase superfamily. Aliphatic amidase family.

It catalyses the reaction formamide + H2O = formate + NH4(+). In terms of biological role, is an aliphatic amidase with a restricted substrate specificity, as it only hydrolyzes formamide. This is Formamidase from Helicobacter pylori (strain HPAG1).